We begin with the raw amino-acid sequence, 411 residues long: Secretion apparatus protein BsaZ (411 aa).

A run of 4 helical transmembrane segments spans residues 28-48 (IVAL…VDLT), 80-100 (IAAP…LVQS), 137-157 (ALLY…LYHA), and 175-195 (IVLT…VLIL). Residues 341-411 (AANRGGPPPE…APARTGDQNA (71 aa)) are disordered. The segment covering 370 to 404 (DACADNAFPDDAPPGAAAPNAGSPDSPAPDGGAPA) has biased composition (low complexity).

This sequence belongs to the type III secretion exporter family.

The protein resides in the cell membrane. Functionally, part of the bsa type III secretion system, is involved in the intracellular replication of invading bacteria inside the host cell. Probably necessary for the lysis of the vacuole membrane and escape into the host cell cytoplasm. This chain is Secretion apparatus protein BsaZ (bsaZ), found in Burkholderia mallei (strain NCTC 10247).